A 490-amino-acid chain; its full sequence is MVSSITRIQNYVIDGAATSDGLATVLESNFAPSLISLPATPLFGTDGIRGKVGELLSAPLALQIGFWAGVVLRSHAGQLRPVILGQDSRNSSDMLAMALSAGLTAAGLEVWYLGLCPTPCVAYLTSVSEAIGGVMISASHNPPEDNGIKIFGANGGKLSQALQAEIEKGLRGNLPITSNVSNCGRHYSRRELVKDYGEALKRPWQNKVNLQGMKVVLDLAWGAAVGLAPSVFAEMGAEVISLHNAADGDRINVNCGSTHLEMLQAAVQEHNADLGFAFDGDADRVLAVDPTGRPVNGDYILYLWGLHLKQQNQLPDNLIVSTVMANLGFEKAWQQQGGKLIRTAVGDQYVQAEMIKTGAMLGGEQSGHILCSHYGMTGDGLLTALHLASLVKQSGVSLAELIDQSFQTYPQLLRNVRVVDRDRRLNWQNCTPVQQAIALAEKAMGDTGRILVRASGTEPVIRVMVEAANAELANYWTNELVAQVQQHLAP.

The active-site Phosphoserine intermediate is the Ser139. Ser139, Asp279, Asp281, and Asp283 together coordinate Mg(2+). Ser139 is modified (phosphoserine).

Belongs to the phosphohexose mutase family. The cofactor is Mg(2+). In terms of processing, activated by phosphorylation.

It carries out the reaction alpha-D-glucosamine 1-phosphate = D-glucosamine 6-phosphate. In terms of biological role, catalyzes the conversion of glucosamine-6-phosphate to glucosamine-1-phosphate. The chain is Phosphoglucosamine mutase from Trichormus variabilis (strain ATCC 29413 / PCC 7937) (Anabaena variabilis).